We begin with the raw amino-acid sequence, 550 residues long: uncharacterized protein (550 aa).

An N-terminal signal peptide occupies residues 1 to 13 (MAGALFEPSFAAA). The disordered stretch occupies residues 312–358 (DAQPDPHLSGDEPPSRPLTPETTLFEALTPDPEPDPPATHAPAELIT).

The protein to M.tuberculosis Rv3776.

This is an uncharacterized protein from Mycobacterium tuberculosis (strain CDC 1551 / Oshkosh).